Here is a 231-residue protein sequence, read N- to C-terminus: MQDVLLQVQAVSKSYHDGDVTTQVLTEVDLQVFKGEQLAIVGTSGSGKSTLLHIMGTLDKPSAGKVLLAGEDLYQVSSARQAQIRNQDLGFIYQFHHLLPEFSALENVAMPAFIQGRDRTQAQADAKVLLERVGLGHRMSHIPAELSGGERQRVAIARALINKPKLVLADEPTGNLDAKSGEAVYELIRELANQLGTAFVVVTHDPKLAARMDRQLTMKNGYLQAVAEHAQ.

Positions 6-231 constitute an ABC transporter domain; the sequence is LQVQAVSKSY…YLQAVAEHAQ (226 aa). An ATP-binding site is contributed by 42 to 49; sequence GTSGSGKS.

The protein belongs to the ABC transporter superfamily. Lipoprotein translocase (TC 3.A.1.125) family. The complex is composed of two ATP-binding proteins (LolD) and two transmembrane proteins (LolC and LolE).

It is found in the cell inner membrane. Its function is as follows. Part of the ABC transporter complex LolCDE involved in the translocation of mature outer membrane-directed lipoproteins, from the inner membrane to the periplasmic chaperone, LolA. Responsible for the formation of the LolA-lipoprotein complex in an ATP-dependent manner. This chain is Lipoprotein-releasing system ATP-binding protein LolD, found in Shewanella sp. (strain MR-7).